The primary structure comprises 269 residues: Holocytochrome-c synthase (269 aa).

Positions 1–72 (MGWFWADQKT…ASKQPGQKMD (72 aa)) are disordered. HRM repeat units lie at residues 25-30 (GCPVMH) and 41-46 (ECPVMQ).

Belongs to the cytochrome c-type heme lyase family.

The protein localises to the mitochondrion inner membrane. The protein resides in the mitochondrion intermembrane space. It catalyses the reaction holo-[cytochrome c] = apo-[cytochrome c] + heme b. In terms of biological role, lyase that catalyzes the covalent linking of the heme group to the cytochrome C apoprotein to produce the mature functional cytochrome. The chain is Holocytochrome-c synthase (CYC3) from Saccharomyces cerevisiae (strain ATCC 204508 / S288c) (Baker's yeast).